We begin with the raw amino-acid sequence, 351 residues long: Renin receptor (351 aa).

A signal peptide spans 1-17; the sequence is MAVLVVFLSFLVADVFG. The Extracellular segment spans residues 18-303; that stretch reads NEFSILRSPG…YNLAYKYNFE (286 aa). Residues 304–324 form a helical membrane-spanning segment; the sequence is YPVVFNLVLWIMIGLALTLIV. Residues 325–351 lie on the Cytoplasmic side of the membrane; that stretch reads TCYNIWNMDPGYDSIIYRMTNQKIRMD. The Mediates retrograde transport to the ER signature appears at 347–351; the sequence is KIRMD.

Interacts with renin. Accessory component of the multisubunit proton-transporting vacuolar (V)-ATPase protein pump. Interacts (via N-terminus) with ATP6AP1 (via N-terminus). Interacts with ATP6V0D1; ATP6V0D1 is a V-ATPase complex subunit and the interaction promotes V-ATPase complex assembly. Interacts with TMEM9; TMEM9 is a V-ATPase assembly regulator and the interaction induces the interaction with ATP6V0D1. Interacts with VMA21 (via N-terminus); VMA21 is a V-ATPase accessory component. Post-translationally, phosphorylated. Proteolytically cleaved by a furin-like convertase in the trans-Golgi network to generate N- and C-terminal fragments. In terms of tissue distribution, expressed in the brain.

The protein resides in the endoplasmic reticulum membrane. It localises to the lysosome membrane. Its subcellular location is the cytoplasmic vesicle. The protein localises to the autophagosome membrane. It is found in the cell projection. The protein resides in the dendritic spine membrane. It localises to the axon. Its subcellular location is the endosome membrane. The protein localises to the clathrin-coated vesicle membrane. It is found in the secretory vesicle. The protein resides in the synaptic vesicle membrane. Functionally, multifunctional protein which functions as a renin, prorenin cellular receptor and is involved in the assembly of the lysosomal proton-transporting V-type ATPase (V-ATPase) and the acidification of the endo-lysosomal system. May mediate renin-dependent cellular responses by activating ERK1 and ERK2. By increasing the catalytic efficiency of renin in AGT/angiotensinogen conversion to angiotensin I, may also play a role in the renin-angiotensin system (RAS). Through its function in V-type ATPase (v-ATPase) assembly and acidification of the lysosome it regulates protein degradation and may control different signaling pathways important for proper brain development, synapse morphology and synaptic transmission. The sequence is that of Renin receptor (ATP6AP2) from Bos taurus (Bovine).